The sequence spans 387 residues: Succinate--CoA ligase [ADP-forming] subunit beta (387 aa).

The 228-residue stretch at 9–236 (KGLFAKHNVP…RAATDPLELK (228 aa)) folds into the ATP-grasp domain. ATP is bound by residues Lys-45, 52-54 (GRG), Ser-94, and Glu-99. 2 residues coordinate Mg(2+): Asn-191 and Asp-205. Substrate-binding positions include Asn-256 and 318 to 320 (GIT).

This sequence belongs to the succinate/malate CoA ligase beta subunit family. Heterotetramer of two alpha and two beta subunits. Mg(2+) serves as cofactor.

The enzyme catalyses succinate + ATP + CoA = succinyl-CoA + ADP + phosphate. It catalyses the reaction GTP + succinate + CoA = succinyl-CoA + GDP + phosphate. It functions in the pathway carbohydrate metabolism; tricarboxylic acid cycle; succinate from succinyl-CoA (ligase route): step 1/1. In terms of biological role, succinyl-CoA synthetase functions in the citric acid cycle (TCA), coupling the hydrolysis of succinyl-CoA to the synthesis of either ATP or GTP and thus represents the only step of substrate-level phosphorylation in the TCA. The beta subunit provides nucleotide specificity of the enzyme and binds the substrate succinate, while the binding sites for coenzyme A and phosphate are found in the alpha subunit. The chain is Succinate--CoA ligase [ADP-forming] subunit beta from Mycobacterium ulcerans (strain Agy99).